The sequence spans 743 residues: Ovocleidin-116 (743 aa).

Positions 1 to 18 (MRATLFCLCLCLLGTVLP) are cleaved as a signal peptide. Cysteines 31 and 42 form a disulfide. N62 carries an N-linked (GlcNAc...) asparagine glycan. The disordered stretch occupies residues 68-225 (KEEGDHQGTI…GTMGTGDSAI (158 aa)). Positions 129–141 (DSNSVYPTSTSVE) are enriched in polar residues. Over residues 169–179 (GPHGDGDGGNG) the composition is skewed to gly residues. An N-linked (GlcNAc...) asparagine; partial glycan is attached at N293. Disordered stretches follow at residues 333–356 (GDSVTSRPVGHPSVGNSGDGATEI), 385–454 (SGKG…GPER), 505–534 (ARTQPEVASAPSTVGKAAPERHRNRAQQEV), 549–577 (RHRARVRPESARLGQAARPEVAPAPSTGG), 628–649 (DPWVWGSAHPQAQHTRGSTVAG), and 692–743 (SGVG…RQSL). Positions 402–420 (ATMTTRGGRGTASSGLTTG) are enriched in low complexity. Polar residues predominate over residues 421-431 (DCSTAASTPSR). Positions 549–558 (RHRARVRPES) are enriched in basic and acidic residues.

Belongs to the osteoregulin family. Asn-62 is fully glycosylated, whereas only less than 10% of Asn-293 seem to be glycosylated. In terms of tissue distribution, in the eggshell, expressed mainly in the palisade and mammillary layers. Expression also detected in the hypertrophic zone of the epiphyseal growth plate, and in cortical and medullary bone (at protein level). Highly expressed in uterus. Not detected in the proximal oviduct, liver, magnum, duodenum and kidney.

It localises to the secreted. Its subcellular location is the extracellular space. The protein resides in the extracellular matrix. Major component of the eggshell matrix. May play an important role in the regulation of calcite growth during eggshell calcification. May also regulate the mineralization process in developing and growing bones. In Gallus gallus (Chicken), this protein is Ovocleidin-116.